Reading from the N-terminus, the 576-residue chain is Low-affinity glucose transporter HXT4 (576 aa).

Residues 1 to 56 (MSEEAAYQEDTAVQNTPADALSPVESDSNSALSTPSNKAERDDMKDFDENHEESNN) form a disordered region. Residues 1 to 66 (MSEEAAYQED…YVEIPKKPAS (66 aa)) are Cytoplasmic-facing. Positions 25 to 37 (ESDSNSALSTPSN) are enriched in polar residues. The segment covering 38–54 (KAERDDMKDFDENHEES) has biased composition (basic and acidic residues). K45 participates in a covalent cross-link: Glycyl lysine isopeptide (Lys-Gly) (interchain with G-Cter in ubiquitin). A helical membrane pass occupies residues 67–87 (AYVTVSICCLMVAFGGFVFGW). The Extracellular portion of the chain corresponds to 88 to 122 (DTGTISGFVAQTDFIRRFGMKHHDGTYYLSKVRTG). The helical transmembrane segment at 123–143 (LMVSIINIGCAIGGIILAKLG) threads the bilayer. The Cytoplasmic portion of the chain corresponds to 144-149 (DMYGRK). The helical transmembrane segment at 150–170 (MGLIVVVVIYIIGIIIQIASI) threads the bilayer. At 171 to 180 (NKWYQYFIGR) the chain is on the extracellular side. A helical transmembrane segment spans residues 181–201 (IISGLGVGGIAVLSPMLISEV). The Cytoplasmic segment spans residues 202–207 (SPKHIR). A helical transmembrane segment spans residues 208 to 228 (GTLVSCYQLMITLGIFLGYCT). Over 229–242 (NYGTKTYTNSVQWR) the chain is Extracellular. The helical transmembrane segment at 243 to 263 (VPLGLGFAWALFMIGGMTFVP) threads the bilayer. At 264–346 (ESPRYLVEVG…IQSLQQLTGD (83 aa)) the chain is on the cytoplasmic side. Residues 347–363 (NYFFYYGTTVFTAVGLS) traverse the membrane as a helical segment. The Extracellular portion of the chain corresponds to 364–369 (DSFETS). The helical transmembrane segment at 370 to 387 (IVLGIVNFASTFVGIFLV) threads the bilayer. Residues 388 to 394 (ERYGRRR) are Cytoplasmic-facing. Residues 395–415 (CLLWGAASMTACMVVFASVGV) form a helical membrane-spanning segment. Topologically, residues 416–437 (TRLWPNGKKNGSSKGAGNCMIV) are extracellular. The N-linked (GlcNAc...) asparagine glycan is linked to N425. A helical membrane pass occupies residues 438–458 (FTCFYLFCFATTWAPIPFVVN). Residues 459 to 475 (SETFPLRVKSKCMAIAQ) are Cytoplasmic-facing. Residues 476 to 496 (ACNWIWGFLIGFFTPFISNAI) traverse the membrane as a helical segment. Position 497 (D497) is a topological domain, extracellular. A helical transmembrane segment spans residues 498-518 (FYYGYVFMGCLVFSYFYVFFF). Residues 519 to 576 (VPETKGLTLEEVNTLWEEGVLPWKSPSWVPPNKRGTDYNADDLMHDDQPFYKKMFGKK) lie on the Cytoplasmic side of the membrane.

The protein belongs to the major facilitator superfamily. Sugar transporter (TC 2.A.1.1) family.

It localises to the cell membrane. Xylose uptake is strongly inhibited by glucose. In terms of biological role, low-affinity glucose transporter. Can also transport xylose. The chain is Low-affinity glucose transporter HXT4 (HXT4) from Saccharomyces cerevisiae (strain JAY291) (Baker's yeast).